We begin with the raw amino-acid sequence, 121 residues long: UPF0212 protein VNG_0879C (121 aa).

It belongs to the UPF0212 family.

The protein is UPF0212 protein VNG_0879C of Halobacterium salinarum (strain ATCC 700922 / JCM 11081 / NRC-1) (Halobacterium halobium).